The following is a 143-amino-acid chain: Large ribosomal subunit protein uL11 (143 aa).

This sequence belongs to the universal ribosomal protein uL11 family. Part of the ribosomal stalk of the 50S ribosomal subunit. Interacts with L10 and the large rRNA to form the base of the stalk. L10 forms an elongated spine to which 2 L12 dimers bind in a sequential fashion forming a pentameric L10(L12)2(L12)2 complex. One or more lysine residues are methylated.

Its function is as follows. Forms part of the ribosomal stalk which helps the ribosome interact with GTP-bound translation factors. The chain is Large ribosomal subunit protein uL11 from Agrobacterium fabrum (strain C58 / ATCC 33970) (Agrobacterium tumefaciens (strain C58)).